Reading from the N-terminus, the 296-residue chain is Diaminopimelate epimerase (296 aa).

Substrate contacts are provided by Asn-17, Gln-49, and Asn-69. Catalysis depends on Cys-78, which acts as the Proton donor. Residues 79-80 (GN), Asn-171, Asn-205, and 223-224 (ER) contribute to the substrate site. Cys-232 (proton acceptor) is an active-site residue. 233–234 (GT) is a substrate binding site.

This sequence belongs to the diaminopimelate epimerase family. Homodimer.

It localises to the cytoplasm. The catalysed reaction is (2S,6S)-2,6-diaminopimelate = meso-2,6-diaminopimelate. It participates in amino-acid biosynthesis; L-lysine biosynthesis via DAP pathway; DL-2,6-diaminopimelate from LL-2,6-diaminopimelate: step 1/1. Its function is as follows. Catalyzes the stereoinversion of LL-2,6-diaminopimelate (L,L-DAP) to meso-diaminopimelate (meso-DAP), a precursor of L-lysine and an essential component of the bacterial peptidoglycan. The protein is Diaminopimelate epimerase of Methylorubrum populi (strain ATCC BAA-705 / NCIMB 13946 / BJ001) (Methylobacterium populi).